The chain runs to 431 residues: Ribosomal RNA small subunit methyltransferase B (431 aa).

S-adenosyl-L-methionine-binding positions include C254–K260, D277, D303, and D322. C375 serves as the catalytic Nucleophile. Residues L398–E417 are disordered. Over residues T403–L412 the composition is skewed to polar residues.

Belongs to the class I-like SAM-binding methyltransferase superfamily. RsmB/NOP family.

It localises to the cytoplasm. The catalysed reaction is cytidine(967) in 16S rRNA + S-adenosyl-L-methionine = 5-methylcytidine(967) in 16S rRNA + S-adenosyl-L-homocysteine + H(+). Functionally, specifically methylates the cytosine at position 967 (m5C967) of 16S rRNA. The chain is Ribosomal RNA small subunit methyltransferase B from Klebsiella pneumoniae (strain 342).